A 128-amino-acid polypeptide reads, in one-letter code: Nascent polypeptide-associated complex protein (128 aa).

The NAC-A/B domain maps to 8-75 (PRMLKKMQKM…PKKIKKEKVE (68 aa)).

It belongs to the NAC-alpha family. In terms of assembly, homodimer. Interacts with the ribosome. Binds ribosomal RNA.

In terms of biological role, contacts the emerging nascent chain on the ribosome. This chain is Nascent polypeptide-associated complex protein, found in Methanocaldococcus jannaschii (strain ATCC 43067 / DSM 2661 / JAL-1 / JCM 10045 / NBRC 100440) (Methanococcus jannaschii).